The chain runs to 165 residues: 2-C-methyl-D-erythritol 2,4-cyclodiphosphate synthase (165 aa).

A divalent metal cation contacts are provided by Asp-8 and His-10. 4-CDP-2-C-methyl-D-erythritol 2-phosphate contacts are provided by residues 8–10 and 34–35; these read DVH and HS. Residue His-42 participates in a divalent metal cation binding. Residues 56–58, 61–65, 132–135, Phe-139, and Arg-142 each bind 4-CDP-2-C-methyl-D-erythritol 2-phosphate; these read DIG, FPDTD, and TTTE.

It belongs to the IspF family. As to quaternary structure, homotrimer. A divalent metal cation serves as cofactor.

It carries out the reaction 4-CDP-2-C-methyl-D-erythritol 2-phosphate = 2-C-methyl-D-erythritol 2,4-cyclic diphosphate + CMP. It functions in the pathway isoprenoid biosynthesis; isopentenyl diphosphate biosynthesis via DXP pathway; isopentenyl diphosphate from 1-deoxy-D-xylulose 5-phosphate: step 4/6. Functionally, involved in the biosynthesis of isopentenyl diphosphate (IPP) and dimethylallyl diphosphate (DMAPP), two major building blocks of isoprenoid compounds. Catalyzes the conversion of 4-diphosphocytidyl-2-C-methyl-D-erythritol 2-phosphate (CDP-ME2P) to 2-C-methyl-D-erythritol 2,4-cyclodiphosphate (ME-CPP) with a corresponding release of cytidine 5-monophosphate (CMP). In Halothermothrix orenii (strain H 168 / OCM 544 / DSM 9562), this protein is 2-C-methyl-D-erythritol 2,4-cyclodiphosphate synthase.